A 136-amino-acid polypeptide reads, in one-letter code: uncharacterized protein (136 aa).

A helical membrane pass occupies residues 40-62 (LFYSISLCVSLLLHISLCVSVYV).

It is found in the membrane. This is an uncharacterized protein from Homo sapiens (Human).